Reading from the N-terminus, the 355-residue chain is Phosphoserine aminotransferase (355 aa).

Arginine 41 contacts L-glutamate. Pyridoxal 5'-phosphate-binding positions include 75–76 (AS), tryptophan 99, threonine 147, aspartate 166, and glutamine 189. N6-(pyridoxal phosphate)lysine is present on lysine 190. 231–232 (NT) provides a ligand contact to pyridoxal 5'-phosphate.

The protein belongs to the class-V pyridoxal-phosphate-dependent aminotransferase family. SerC subfamily. In terms of assembly, homodimer. The cofactor is pyridoxal 5'-phosphate.

The protein resides in the cytoplasm. The enzyme catalyses O-phospho-L-serine + 2-oxoglutarate = 3-phosphooxypyruvate + L-glutamate. It catalyses the reaction 4-(phosphooxy)-L-threonine + 2-oxoglutarate = (R)-3-hydroxy-2-oxo-4-phosphooxybutanoate + L-glutamate. Its pathway is amino-acid biosynthesis; L-serine biosynthesis; L-serine from 3-phospho-D-glycerate: step 2/3. It participates in cofactor biosynthesis; pyridoxine 5'-phosphate biosynthesis; pyridoxine 5'-phosphate from D-erythrose 4-phosphate: step 3/5. In terms of biological role, catalyzes the reversible conversion of 3-phosphohydroxypyruvate to phosphoserine and of 3-hydroxy-2-oxo-4-phosphonooxybutanoate to phosphohydroxythreonine. The protein is Phosphoserine aminotransferase of Bacteroides thetaiotaomicron (strain ATCC 29148 / DSM 2079 / JCM 5827 / CCUG 10774 / NCTC 10582 / VPI-5482 / E50).